A 148-amino-acid chain; its full sequence is Lysozyme C (148 aa).

The N-terminal stretch at 1 to 18 (MKAVIILGLVLLSVTVQG) is a signal peptide. The 130-residue stretch at 19–148 (KIFERCELAR…VSQYVQGCGV (130 aa)) folds into the C-type lysozyme domain. 4 disulfides stabilise this stretch: C24-C146, C48-C134, C83-C99, and C95-C113. Catalysis depends on residues E53 and D71.

The protein belongs to the glycosyl hydrolase 22 family. Monomer.

It catalyses the reaction Hydrolysis of (1-&gt;4)-beta-linkages between N-acetylmuramic acid and N-acetyl-D-glucosamine residues in a peptidoglycan and between N-acetyl-D-glucosamine residues in chitodextrins.. Functionally, lysozymes have primarily a bacteriolytic function; those in tissues and body fluids are associated with the monocyte-macrophage system and enhance the activity of immunoagents. The sequence is that of Lysozyme C (LYZ) from Erythrocebus patas (Red guenon).